Reading from the N-terminus, the 326-residue chain is uncharacterized protein (326 aa).

This is an uncharacterized protein from Escherichia coli (strain K12).